A 65-amino-acid chain; its full sequence is Translational regulator CsrA (65 aa).

The protein belongs to the CsrA/RsmA family. In terms of assembly, homodimer; the beta-strands of each monomer intercalate to form a hydrophobic core, while the alpha-helices form wings that extend away from the core.

It is found in the cytoplasm. In terms of biological role, a key translational regulator that binds mRNA to regulate translation initiation and/or mRNA stability. Mediates global changes in gene expression, shifting from rapid growth to stress survival by linking envelope stress, the stringent response and the catabolite repression systems. Usually binds in the 5'-UTR; binding at or near the Shine-Dalgarno sequence prevents ribosome-binding, repressing translation, binding elsewhere in the 5'-UTR can activate translation and/or stabilize the mRNA. Its function is antagonized by small RNA(s). The sequence is that of Translational regulator CsrA from Pseudomonas putida (strain ATCC 47054 / DSM 6125 / CFBP 8728 / NCIMB 11950 / KT2440).